Here is a 167-residue protein sequence, read N- to C-terminus: I-Kappa-B like protein F2 (167 aa).

3 ANK repeats span residues 54 to 86 (HGKQ…DING), 91 to 121 (FGNT…NMGI), and 125 to 154 (LFKT…RCGV).

This sequence belongs to the polydnaviridae I-Kappa-B-like protein family.

Suppresses the host immune response through NF-kappa-B inactivation. Possesses ankyrin repeat domains required for NF-kappa-B binding but lacks the regulatory regions required for dissociation from NF-kappa-B and degradation. Therefore, prevents host NF-kappa-B release and subsequent activation. This chain is I-Kappa-B like protein F2 (F3), found in Microplitis demolitor bracovirus (isolate Webb) (MdBV).